The chain runs to 276 residues: Putative phosphoenolpyruvate synthase regulatory protein (276 aa).

156–163 provides a ligand contact to ADP; the sequence is GVSRSGKT.

The protein belongs to the pyruvate, phosphate/water dikinase regulatory protein family. PSRP subfamily.

It catalyses the reaction [pyruvate, water dikinase] + ADP = [pyruvate, water dikinase]-phosphate + AMP + H(+). It carries out the reaction [pyruvate, water dikinase]-phosphate + phosphate + H(+) = [pyruvate, water dikinase] + diphosphate. Functionally, bifunctional serine/threonine kinase and phosphorylase involved in the regulation of the phosphoenolpyruvate synthase (PEPS) by catalyzing its phosphorylation/dephosphorylation. This is Putative phosphoenolpyruvate synthase regulatory protein from Acidovorax ebreus (strain TPSY) (Diaphorobacter sp. (strain TPSY)).